A 159-amino-acid polypeptide reads, in one-letter code: Probable histone H2A.5 (159 aa).

The segment covering 1–10 has biased composition (gly residues); it reads MDAAGAGAGG. Disordered stretches follow at residues 1-29 and 136-159; these read MDAA…KKAV and EKAA…PKKA. 2 stretches are compositionally biased toward basic residues: residues 11-29 and 148-159; these read KLKK…KKAV and PKKAAGKSPKKA. Short sequence motifs (SPKK motif) lie at residues 147–150 and 155–158; these read SPKK.

The protein belongs to the histone H2A family. The nucleosome is a histone octamer containing two molecules each of H2A, H2B, H3 and H4 assembled in one H3-H4 heterotetramer and two H2A-H2B heterodimers. The octamer wraps approximately 147 bp of DNA.

The protein resides in the nucleus. It is found in the chromosome. Functionally, core component of nucleosome. Nucleosomes wrap and compact DNA into chromatin, limiting DNA accessibility to the cellular machineries which require DNA as a template. Histones thereby play a central role in transcription regulation, DNA repair, DNA replication and chromosomal stability. DNA accessibility is regulated via a complex set of post-translational modifications of histones, also called histone code, and nucleosome remodeling. In Oryza sativa subsp. indica (Rice), this protein is Probable histone H2A.5.